The sequence spans 374 residues: CC-adding tRNA nucleotidyltransferase (374 aa).

39–42 contacts CTP; it reads GAVR. The Mg(2+) site is built by Asp-52 and Asp-54. Residues 126-127, Asn-131, 171-180, and Arg-209 each bind CTP; these read RD and DASRLVRAAR.

The protein belongs to the tRNA nucleotidyltransferase/poly(A) polymerase family. Mg(2+) is required as a cofactor.

The catalysed reaction is a tRNA precursor + 2 CTP = a tRNA with a 3' CC end + 2 diphosphate. Its function is as follows. tRNA nucleotidyltransferase involved in the synthesis of the tRNA CCA terminus. Adds the two cytidine residues to tRNA. This is CC-adding tRNA nucleotidyltransferase from Deinococcus radiodurans (strain ATCC 13939 / DSM 20539 / JCM 16871 / CCUG 27074 / LMG 4051 / NBRC 15346 / NCIMB 9279 / VKM B-1422 / R1).